A 62-amino-acid polypeptide reads, in one-letter code: Protein P14 (62 aa).

Its function is as follows. Needed for optimal phage development. The polypeptide is Protein P14 (P14) (Pseudomonas savastanoi pv. phaseolicola (Pseudomonas syringae pv. phaseolicola)).